The following is a 385-amino-acid chain: Bifunctional chorismate mutase/prephenate dehydratase (385 aa).

The Chorismate mutase domain occupies 1 to 92 (MPSKNDLLSF…ESVLTQKKLL (92 aa)). The substrate site is built by R11, R28, K39, D48, E52, S84, and Q88. A Prephenate dehydratase domain is found at 105 to 285 (SFSFLGPKGS…NITRFILLSR (181 aa)). The regulatory stretch occupies residues 286-385 (KPVSISSKIP…PSENITPIIP (100 aa)). The ACT domain maps to 299–376 (TLIFNTGQES…KFIKILGCYP (78 aa)).

It localises to the cytoplasm. It carries out the reaction chorismate = prephenate. It catalyses the reaction prephenate + H(+) = 3-phenylpyruvate + CO2 + H2O. It functions in the pathway amino-acid biosynthesis; L-phenylalanine biosynthesis; phenylpyruvate from prephenate: step 1/1. The protein operates within metabolic intermediate biosynthesis; prephenate biosynthesis; prephenate from chorismate: step 1/1. Catalyzes the Claisen rearrangement of chorismate to prephenate and the decarboxylation/dehydration of prephenate to phenylpyruvate. The protein is Bifunctional chorismate mutase/prephenate dehydratase (pheA) of Buchnera aphidicola subsp. Schizaphis graminum (strain Sg).